The following is a 406-amino-acid chain: Probable tRNA sulfurtransferase (406 aa).

The THUMP domain maps to 60 to 166 (DQVMNRLKLV…LNGIFLSSET (107 aa)). ATP is bound by residues 184–185 (MM), 209–210 (HF), Arg-266, Gly-288, and Gln-297.

Belongs to the ThiI family.

It is found in the cytoplasm. It catalyses the reaction [ThiI sulfur-carrier protein]-S-sulfanyl-L-cysteine + a uridine in tRNA + 2 reduced [2Fe-2S]-[ferredoxin] + ATP + H(+) = [ThiI sulfur-carrier protein]-L-cysteine + a 4-thiouridine in tRNA + 2 oxidized [2Fe-2S]-[ferredoxin] + AMP + diphosphate. It carries out the reaction [ThiS sulfur-carrier protein]-C-terminal Gly-Gly-AMP + S-sulfanyl-L-cysteinyl-[cysteine desulfurase] + AH2 = [ThiS sulfur-carrier protein]-C-terminal-Gly-aminoethanethioate + L-cysteinyl-[cysteine desulfurase] + A + AMP + 2 H(+). It functions in the pathway cofactor biosynthesis; thiamine diphosphate biosynthesis. Its function is as follows. Catalyzes the ATP-dependent transfer of a sulfur to tRNA to produce 4-thiouridine in position 8 of tRNAs, which functions as a near-UV photosensor. Also catalyzes the transfer of sulfur to the sulfur carrier protein ThiS, forming ThiS-thiocarboxylate. This is a step in the synthesis of thiazole, in the thiamine biosynthesis pathway. The sulfur is donated as persulfide by IscS. This Limosilactobacillus reuteri subsp. reuteri (strain JCM 1112) (Lactobacillus reuteri) protein is Probable tRNA sulfurtransferase.